We begin with the raw amino-acid sequence, 416 residues long: PRKCA-binding protein (416 aa).

The PDZ domain maps to Lys-22–Gln-105. Zn(2+) is bound by residues Cys-44 and Cys-46. A Phosphothreonine modification is found at Thr-82. An AH domain is found at Leu-144–Val-357. The disordered stretch occupies residues Pro-373–Ser-416. Over residues Asp-380–Asp-390 the composition is skewed to acidic residues. Cys-414 carries the S-palmitoyl cysteine; by DHHC8 lipid modification.

In terms of assembly, monomer and homodimer. Interacts with CXADR. Interacts presynaptically with the glutamate receptors GRIA2, GRIA3, GRIK3, isoform 3 of GRIA4, isoform A of GRM4, GRM7 and GRM8; with NAPA and NAPB; and with BTG2. The interaction with NAPA and NAPB disrupts the interaction with GRIA2, conducting to the internalization of GRIA2. Interacts with PRKCA; with the amine transporters SLC6A2 and SLC6A3; with the channels ASIC1 and ASIC2; with the GTP-binding proteins ARF1 and ARF3; with the ephrin receptor tyrosine kinases EPHA7, EPHB1 and EPHB2; with ERBB2 and through its PDZ domain with the C-terminal tail of PRLHR. Interacts with UNC5A. Interacts (via AH domain) with NCS1/FREQ; in a calcium-dependent manner. Interacts with F-actin and associates with the ARP2/3 complex. Interacts (via PDZ domain) with ARF1 (activated); the interaction blocks Arp2/3 complex inhibition. Interacts with SORCS3. Phosphorylation at Thr-82 appears to inhibit the interaction with AMPA receptors. Phosphorylated on tyrosine residues by EPHB2 and on serine or threonine residues by PKC. In terms of processing, palmitoylation on Cys-414 is essential for long-term synaptic depression (LTD). In terms of tissue distribution, expressed in all tissues examined, with highest levels in brain and testes and lowest levels in lung.

The protein resides in the cytoplasm. The protein localises to the perinuclear region. It is found in the membrane. Its subcellular location is the postsynaptic density. It localises to the synapse. The protein resides in the synaptosome. The protein localises to the cytoskeleton. Probable adapter protein that bind to and organize the subcellular localization of a variety of membrane proteins containing some PDZ recognition sequence. Involved in the clustering of various receptors, possibly by acting at the receptor internalization level. Plays a role in synaptic plasticity by regulating the trafficking and internalization of AMPA receptors. May be regulated upon PRKCA activation. May regulate ASIC1/ASIC3 channel. Regulates actin polymerization by inhibiting the actin-nucleating activity of the Arp2/3 complex; the function is competitive with nucleation promoting factors and is linked to neuronal morphology regulation and AMPA receptor (AMPAR) endocytosis. Via interaction with the Arp2/3 complex involved in regulation of synaptic plasicity of excitatory synapses and required for spine shrinkage during long-term depression (LTD). Involved in regulation of astrocyte morphology, antagonistic to Arp2/3 complex activator WASL/N-WASP function. The protein is PRKCA-binding protein (Pick1) of Mus musculus (Mouse).